We begin with the raw amino-acid sequence, 245 residues long: Eukaryotic translation initiation factor 3 subunit K (245 aa).

Residues 46–227 (YDCYANLALL…EAKGTVVREN (182 aa)) enclose the PCI domain.

Belongs to the eIF-3 subunit K family. In terms of assembly, component of the eukaryotic translation initiation factor 3 (eIF-3) complex.

The protein localises to the cytoplasm. Component of the eukaryotic translation initiation factor 3 (eIF-3) complex, which is involved in protein synthesis of a specialized repertoire of mRNAs and, together with other initiation factors, stimulates binding of mRNA and methionyl-tRNAi to the 40S ribosome. The eIF-3 complex specifically targets and initiates translation of a subset of mRNAs involved in cell proliferation. The sequence is that of Eukaryotic translation initiation factor 3 subunit K from Botryotinia fuckeliana (strain B05.10) (Noble rot fungus).